The primary structure comprises 404 residues: Phosphoglycerate kinase (404 aa).

Substrate contacts are provided by residues 26–28, Arg-41, 64–67, Arg-124, and Arg-161; these read DFN and HLGR. ATP contacts are provided by residues Lys-212, Gly-301, Glu-332, and 359 to 362; that span reads GGDS.

The protein belongs to the phosphoglycerate kinase family. In terms of assembly, monomer.

It localises to the cytoplasm. The enzyme catalyses (2R)-3-phosphoglycerate + ATP = (2R)-3-phospho-glyceroyl phosphate + ADP. The protein operates within carbohydrate degradation; glycolysis; pyruvate from D-glyceraldehyde 3-phosphate: step 2/5. The protein is Phosphoglycerate kinase of Mesomycoplasma hyopneumoniae (strain 232) (Mycoplasma hyopneumoniae).